The chain runs to 92 residues: Small ribosomal subunit protein bS20 (92 aa).

The segment at 1–23 (MANTPSAKKRAKQAEKRRSHNAS) is disordered. Over residues 7-20 (AKKRAKQAEKRRSH) the composition is skewed to basic residues.

This sequence belongs to the bacterial ribosomal protein bS20 family.

In terms of biological role, binds directly to 16S ribosomal RNA. This Pseudomonas entomophila (strain L48) protein is Small ribosomal subunit protein bS20.